The sequence spans 208 residues: Holliday junction branch migration complex subunit RuvA (208 aa).

Residues 1 to 63 form a domain I region; that stretch reads MIAFVSGPVA…EDSLTLYGFA (63 aa). A domain II region spans residues 64–142; it reads NDDERQVFEL…EPVGAHIGQQ (79 aa). The interval 143 to 147 is flexible linker; that stretch reads GIGTP. The interval 148-208 is domain III; that stretch reads VTSGWRDQLQ…AALQTLNRAR (61 aa).

It belongs to the RuvA family. Homotetramer. Forms an RuvA(8)-RuvB(12)-Holliday junction (HJ) complex. HJ DNA is sandwiched between 2 RuvA tetramers; dsDNA enters through RuvA and exits via RuvB. An RuvB hexamer assembles on each DNA strand where it exits the tetramer. Each RuvB hexamer is contacted by two RuvA subunits (via domain III) on 2 adjacent RuvB subunits; this complex drives branch migration. In the full resolvosome a probable DNA-RuvA(4)-RuvB(12)-RuvC(2) complex forms which resolves the HJ.

It localises to the cytoplasm. In terms of biological role, the RuvA-RuvB-RuvC complex processes Holliday junction (HJ) DNA during genetic recombination and DNA repair, while the RuvA-RuvB complex plays an important role in the rescue of blocked DNA replication forks via replication fork reversal (RFR). RuvA specifically binds to HJ cruciform DNA, conferring on it an open structure. The RuvB hexamer acts as an ATP-dependent pump, pulling dsDNA into and through the RuvAB complex. HJ branch migration allows RuvC to scan DNA until it finds its consensus sequence, where it cleaves and resolves the cruciform DNA. This is Holliday junction branch migration complex subunit RuvA from Streptomyces griseus subsp. griseus (strain JCM 4626 / CBS 651.72 / NBRC 13350 / KCC S-0626 / ISP 5235).